Consider the following 664-residue polypeptide: DNA ligase (664 aa).

NAD(+)-binding positions include 32–36 (DKEYD) and 80–81 (SL). Residue Lys-122 is the N6-AMP-lysine intermediate of the active site. Residues Arg-144, Glu-178, and Lys-314 each coordinate NAD(+). Residues Cys-407, Cys-410, Cys-423, and Cys-429 each coordinate Zn(2+). The BRCT domain maps to 587-664 (IDENPFMGKT…NEEEFSNKIK (78 aa)).

The protein belongs to the NAD-dependent DNA ligase family. LigA subfamily. Mg(2+) serves as cofactor. It depends on Mn(2+) as a cofactor.

It catalyses the reaction NAD(+) + (deoxyribonucleotide)n-3'-hydroxyl + 5'-phospho-(deoxyribonucleotide)m = (deoxyribonucleotide)n+m + AMP + beta-nicotinamide D-nucleotide.. Its function is as follows. DNA ligase that catalyzes the formation of phosphodiester linkages between 5'-phosphoryl and 3'-hydroxyl groups in double-stranded DNA using NAD as a coenzyme and as the energy source for the reaction. It is essential for DNA replication and repair of damaged DNA. This chain is DNA ligase, found in Clostridium botulinum (strain 657 / Type Ba4).